Reading from the N-terminus, the 337-residue chain is MVNVGINGFGRIGRIVFRNALLNPKIQVVAINDPFINLEYMVYMFKYDSVHGRFKGTVEAKDGKLWIQGKPVIVYGEKNPSDIKWGAAGRDYVVESTGVFTTVEKAEGHLKGGAKKVIISAPSADAPMFVMGCNLDQYDPKYTVISNASCTTNCLAPLTKVIHDKYGIIEGLMSTIHATTATQKTVDGPSNKDWRGGRAVVNNIIPSSTGAAKAVGKVIPSLNGKLTGLSFRVPTIDVSVIDLVVRLEKPASYEDIKKTVKEASEGAYKGIIEYTEEQVVSADFIGHHASSIFDAQAGIQLNPNFVKLIVWYDNEWGYSARVCDLLVFAAEQDAKQQ.

NAD(+) is bound by residues 11 to 12, aspartate 33, and lysine 78; that span reads RI. D-glyceraldehyde 3-phosphate-binding positions include 149-151, threonine 180, 209-210, and arginine 232; these read SCT and TG. Cysteine 150 (nucleophile) is an active-site residue. Residue asparagine 314 coordinates NAD(+).

It belongs to the glyceraldehyde-3-phosphate dehydrogenase family. As to quaternary structure, homotetramer.

Its subcellular location is the cytoplasm. It catalyses the reaction D-glyceraldehyde 3-phosphate + phosphate + NAD(+) = (2R)-3-phospho-glyceroyl phosphate + NADH + H(+). Its pathway is carbohydrate degradation; glycolysis; pyruvate from D-glyceraldehyde 3-phosphate: step 1/5. The sequence is that of Glyceraldehyde-3-phosphate dehydrogenase (GPD) from Lyophyllum shimeji (Hon-shimeji).